We begin with the raw amino-acid sequence, 131 residues long: uncharacterized protein (131 aa).

Residues 1 to 116 (MYMARMLSEM…EMLEASSIQC (116 aa)) enclose the CMP/dCMP-type deaminase domain.

This is an uncharacterized protein from Caenorhabditis elegans.